Reading from the N-terminus, the 665-residue chain is Translation factor guf1, mitochondrial (665 aa).

The transit peptide at 1-53 (MRGCLQVLRWLSTSPARRPVSSGLRLRSYEIVSPSILRPFTSTVRRQAQASRN) directs the protein to the mitochondrion. In terms of domain architecture, tr-type G spans 67-247 (ERFRNFCIVA…TVIERIPAPV (181 aa)). GTP-binding positions include 76 to 83 (AHVDHGKS), 140 to 144 (DTPGH), and 194 to 197 (NKVD).

The protein belongs to the TRAFAC class translation factor GTPase superfamily. Classic translation factor GTPase family. LepA subfamily.

It is found in the mitochondrion inner membrane. The catalysed reaction is GTP + H2O = GDP + phosphate + H(+). Its function is as follows. Promotes mitochondrial protein synthesis. May act as a fidelity factor of the translation reaction, by catalyzing a one-codon backward translocation of tRNAs on improperly translocated ribosomes. Binds to mitochondrial ribosomes in a GTP-dependent manner. The chain is Translation factor guf1, mitochondrial (guf1) from Talaromyces stipitatus (strain ATCC 10500 / CBS 375.48 / QM 6759 / NRRL 1006) (Penicillium stipitatum).